We begin with the raw amino-acid sequence, 1437 residues long: uncharacterized protein (1437 aa).

Residues 1-25 (MRRGCRHHLAAVVLLIATFPPLAYN) form the signal peptide. At 26-1326 (QNIGGINQNI…SRIKENYFKW (1301 aa)) the chain is on the extracellular side. N-linked (GlcNAc...) asparagine glycosylation is found at Asn103, Asn315, Asn364, Asn492, Asn605, Asn676, and Asn914. The NIDO domain occupies 193-356 (AFFGQQASQA…GRYMFRVDDV (164 aa)). Positions 648-829 (VKEKSREMCH…FRCQMFYWRR (182 aa)) constitute an AMOP domain. The chain crosses the membrane as a helical span at residues 1327–1347 (LAVIAGIVGIIIVILLIFLVF). The Cytoplasmic portion of the chain corresponds to 1348 to 1437 (WCIKRKKLQE…QGMLGLNTSV (90 aa)). Residues 1394 to 1419 (PRTVAMPPPRGTTATPMTLEPRGFSP) are disordered.

The protein resides in the membrane. This is an uncharacterized protein from Caenorhabditis elegans.